Here is a 282-residue protein sequence, read N- to C-terminus: Hepatitis A virus cellular receptor 2 homolog (282 aa).

A signal peptide spans 1–21; the sequence is MFSWLPFSCALLLLQPLPARS. Residues 22–131 enclose the Ig-like V-type domain; it reads LENAYTAEVG…EKLELKLSIT (110 aa). Over 22–194 the chain is Extracellular; sequence LENAYTAEVG…KDSGETIRTA (173 aa). 3 cysteine pairs are disulfide-bonded: cysteine 38–cysteine 111, cysteine 52–cysteine 63, and cysteine 58–cysteine 110. Position 62 (glutamine 62) interacts with a 1,2-diacyl-sn-glycero-3-phospho-L-serine. Asparagine 74 and asparagine 100 each carry an N-linked (GlcNAc...) asparagine glycan. Arginine 112 provides a ligand contact to a 1,2-diacyl-sn-glycero-3-phospho-L-serine. The Ca(2+) site is built by phenylalanine 115 and glycine 117. Methionine 119 contributes to the a 1,2-diacyl-sn-glycero-3-phospho-L-serine binding site. Residue asparagine 120 coordinates Ca(2+). Residues 138-163 form a disordered region; the sequence is PAGTAHGDSTTASPRTLTTEGSGSET. Positions 144–163 are enriched in polar residues; that stretch reads GDSTTASPRTLTTEGSGSET. A glycan (O-linked (GalNAc...) threonine) is linked at threonine 147. An N-linked (GlcNAc...) asparagine glycan is attached at asparagine 173. The chain crosses the membrane as a helical span at residues 195–215; the sequence is VHIGVGVSAGLALALILGVLI. Residues 216–282 are Cytoplasmic-facing; that stretch reads LKWYSSKKKK…YCYVSSQQPS (67 aa). Residues 253-271 form an interaction with BAG6 region; that stretch reads EENIYTIEENIYEMENSNE. Tyrosine 257 is subject to Phosphotyrosine; by ITK.

The protein belongs to the immunoglobulin superfamily. TIM family. As to quaternary structure, interacts with HMGB1; impairs HMGB1 binding to B-DNA and likely HMGB1-mediated innate immune response. Interacts with BAG6. Interacts (phosphorylated) with PIK3R1 and PIK3R2. Interacts (not dependent on its phosphorylation status) with FYN. Interacts (in basal state T-cells) with VAV1; AKT1/2, LCP2, ZAP70, SYK, PIK3R1, FYN, SH3BP2 and SH2D2A. Interacts (in activated T-cells) with LCK and PLCG. Interacts with ILF3; this interaction promotes ILF3 ubiquitination and degradation.

It is found in the membrane. The protein resides in the cell junction. In terms of biological role, cell surface receptor implicated in modulating innate and adaptive immune responses. Generally accepted to have an inhibiting function. Reports on stimulating functions suggest that the activity may be influenced by the cellular context and/or the respective ligand. Regulates macrophage activation. Inhibits T-helper type 1 lymphocyte (Th1)-mediated auto- and alloimmune responses and promotes immunological tolerance. In CD8+ cells attenuates TCR-induced signaling, specifically by blocking NF-kappaB and NFAT promoter activities resulting in the loss of IL-2 secretion. The function may implicate its association with LCK proposed to impair phosphorylation of TCR subunits. In contrast, shown to activate TCR-induced signaling in T-cells probably implicating ZAP70, LCP2, LCK and FYN. Expressed on Treg cells can inhibit Th17 cell responses. Receptor for LGALS9. Binding to LGALS9 is believed to result in suppression of T-cell responses; the resulting apoptosis of antigen-specific cells may implicate HAVCR2 phosphorylation and disruption of its association with BAG6. Binding to LGALS9 is proposed to be involved in innate immune response to intracellular pathogens. Expressed on Th1 cells interacts with LGALS9 expressed on Mycobacterium tuberculosis-infected macrophages to stimulate antibactericidal activity including IL-1 beta secretion and to restrict intracellular bacterial growth. However, the function as receptor for LGALS9 has been challenged. Also reported to enhance CD8+ T cell responses to an acute infection such as by Listeria monocytogenes. Receptor for phosphatidylserine (PtSer); PtSer-binding is calcium-dependent. May recognize PtSer on apoptotic cells leading to their phagocytosis. Mediates the engulfment of apoptotic cells by dendritic cells. Expressed on T-cells, promotes conjugation but not engulfment of apoptotic cells. Expressed on dendritic cells (DCs) positively regulates innate immune response and in synergy with Toll-like receptors promotes secretion of TNF-alpha. In tumor-imfiltrating DCs suppresses nucleic acid-mediated innate immune repsonse by interaction with HMGB1 and interfering with nucleic acid-sensing and trafficking of nucleid acids to endosomes. Can enhance mast cell production of Th2 cytokines Il-4, IL-6 and IL-13. Expressed on natural killer (NK) cells acts as a coreceptor to enhance IFN-gamma production in response to LGALS9. In contrast, shown to suppress NK cell-mediated cytotoxicity. Negatively regulates NK cell function in LPS-induced endotoxic shock. The chain is Hepatitis A virus cellular receptor 2 homolog (Havcr2) from Rattus norvegicus (Rat).